The sequence spans 767 residues: Acetylcholinesterase (767 aa).

The first 19 residues, 1-19 (MAPLFLLLLLLLSPSPTSA), serve as a signal peptide directing secretion. C94 and C121 are joined by a disulfide. S227 functions as the Acyl-ester intermediate in the catalytic mechanism. The cysteines at positions 281 and 292 are disulfide-linked. N-linked (GlcNAc...) asparagine glycosylation occurs at N285. A disordered region spans residues 401-504 (KEGYGVEGDG…YGAKMPPRPH (104 aa)). E520 (charge relay system) is an active-site residue. N536 carries an N-linked (GlcNAc...) asparagine glycan. A disulfide bridge links C595 with C713. H633 (charge relay system) is an active-site residue. 2 N-linked (GlcNAc...) asparagine glycosylation sites follow: N650 and N725.

Belongs to the type-B carboxylesterase/lipase family. As to quaternary structure, oligomer composed of disulfide-linked homodimers.

It localises to the synapse. The protein localises to the secreted. It is found in the cell membrane. The catalysed reaction is acetylcholine + H2O = choline + acetate + H(+). Functionally, terminates signal transduction at the neuromuscular junction by rapid hydrolysis of the acetylcholine released into the synaptic cleft. The sequence is that of Acetylcholinesterase (ACHE) from Gallus gallus (Chicken).